The primary structure comprises 187 residues: MYMQVETRTSTRLHLKRAPGIRSWSLLVGILSTGLAAAYYSGDSLGWKLFYVTGCLFVAVQNLEDWEEAIFNKNTGKVILKTFSLYKKLLTLLRAGHDQVVVLLKDIQDVNVEEEKVRYFGKGYMVVLRFATGFSHPLTQSAVMGRRSDVEAIAKLITSFLELHRLESPSERSQSSDSEPDGPGGQS.

The helical transmembrane segment at 20 to 42 (GIRSWSLLVGILSTGLAAAYYSG) threads the bilayer. The segment at 167-187 (ESPSERSQSSDSEPDGPGGQS) is disordered. S168 and S170 each carry phosphoserine.

Belongs to the CYBC1 family. In terms of assembly, interacts with CYBB; CYBC1 may act as a chaperone stabilizing Cytochrome b-245 heterodimer.

The protein localises to the endoplasmic reticulum membrane. Its function is as follows. Functions as a chaperone necessary for a stable expression of the CYBA and CYBB subunits of the cytochrome b-245 heterodimer. Controls the phagocyte respiratory burst and is essential for innate immunity. In Mus musculus (Mouse), this protein is Cytochrome b-245 chaperone 1.